The chain runs to 227 residues: 2-C-methyl-D-erythritol 4-phosphate cytidylyltransferase (227 aa).

This sequence belongs to the IspD/TarI cytidylyltransferase family. IspD subfamily.

It catalyses the reaction 2-C-methyl-D-erythritol 4-phosphate + CTP + H(+) = 4-CDP-2-C-methyl-D-erythritol + diphosphate. The protein operates within isoprenoid biosynthesis; isopentenyl diphosphate biosynthesis via DXP pathway; isopentenyl diphosphate from 1-deoxy-D-xylulose 5-phosphate: step 2/6. Catalyzes the formation of 4-diphosphocytidyl-2-C-methyl-D-erythritol from CTP and 2-C-methyl-D-erythritol 4-phosphate (MEP). The sequence is that of 2-C-methyl-D-erythritol 4-phosphate cytidylyltransferase from Bordetella parapertussis (strain 12822 / ATCC BAA-587 / NCTC 13253).